We begin with the raw amino-acid sequence, 629 residues long: Arginine--tRNA ligase (629 aa).

The 'HIGH' region motif lies at 128 to 138 (VNPTKPLHMGH).

It belongs to the class-I aminoacyl-tRNA synthetase family.

The protein localises to the cytoplasm. The catalysed reaction is tRNA(Arg) + L-arginine + ATP = L-arginyl-tRNA(Arg) + AMP + diphosphate. The chain is Arginine--tRNA ligase (argS) from Pyrococcus horikoshii (strain ATCC 700860 / DSM 12428 / JCM 9974 / NBRC 100139 / OT-3).